A 130-amino-acid polypeptide reads, in one-letter code: Large ribosomal subunit protein bL12 (130 aa).

It belongs to the bacterial ribosomal protein bL12 family. As to quaternary structure, homodimer. Part of the ribosomal stalk of the 50S ribosomal subunit. Forms a multimeric L10(L12)X complex, where L10 forms an elongated spine to which 2 to 4 L12 dimers bind in a sequential fashion. Binds GTP-bound translation factors.

In terms of biological role, forms part of the ribosomal stalk which helps the ribosome interact with GTP-bound translation factors. Is thus essential for accurate translation. This Chlamydia muridarum (strain MoPn / Nigg) protein is Large ribosomal subunit protein bL12.